Here is a 203-residue protein sequence, read N- to C-terminus: FMN-dependent NADH:quinone oxidoreductase (203 aa).

FMN is bound by residues Ser9 and 15–17 (SKS).

This sequence belongs to the azoreductase type 1 family. As to quaternary structure, homodimer. It depends on FMN as a cofactor.

It carries out the reaction 2 a quinone + NADH + H(+) = 2 a 1,4-benzosemiquinone + NAD(+). The enzyme catalyses N,N-dimethyl-1,4-phenylenediamine + anthranilate + 2 NAD(+) = 2-(4-dimethylaminophenyl)diazenylbenzoate + 2 NADH + 2 H(+). In terms of biological role, quinone reductase that provides resistance to thiol-specific stress caused by electrophilic quinones. Functionally, also exhibits azoreductase activity. Catalyzes the reductive cleavage of the azo bond in aromatic azo compounds to the corresponding amines. In Bordetella avium (strain 197N), this protein is FMN-dependent NADH:quinone oxidoreductase.